Consider the following 471-residue polypeptide: MLLPVIMAGGTGSRLWPMSRELYPKQFLRLFGQNSMLQETITRLSGLEVHEPMVICNEEHRFLVAEQLRQLNKLSSNIILEPVGRNTAPAIALAALQATRHGDDPLMLVLAADHIINNQPVFHDAIRVAEQYADEGHLVTFGIVPNAPETGYGYIQRGVAVTDSAHTPYQVARFVEKPDRERAGAYLASGEYYWNSGMFMFRAKKYLSELAKFRPDILEACQAAVNAADNGSDFISIPHDIFCECPDESVDYAVMEKTADAVVVGLDADWSDVGSWSALWEVSPKDGQGNVLSGDAWVHNSENCYINSDEKLVAAIGVENLVIVSTKDAVLVMNRERSQDVKKAVEFLKQNQRTEYKRHREIYRPWGRCDVVVQTPRFNVNRITVKPGGAFSMQMHHHRAEHWVILAGTGQVTVNGKQFLLSENQSTFIPIGAEHCLENPGCIPLEVLEIQSGSYLGEDDIIRIKDQYGRC.

It belongs to the mannose-6-phosphate isomerase type 2 family.

It carries out the reaction alpha-D-mannose 1-phosphate + GTP + H(+) = GDP-alpha-D-mannose + diphosphate. It functions in the pathway nucleotide-sugar biosynthesis; GDP-alpha-D-mannose biosynthesis; GDP-alpha-D-mannose from alpha-D-mannose 1-phosphate (GTP route): step 1/1. Its pathway is bacterial outer membrane biogenesis; LPS O-antigen biosynthesis. In terms of biological role, involved in GDP-mannose biosynthesis which serves as the activated sugar nucleotide precursor for mannose residues in cell surface polysaccharides. This enzyme participates in synthesis of the LPS O9 antigen. This chain is Mannose-1-phosphate guanylyltransferase (manC), found in Escherichia coli.